The chain runs to 278 residues: Orotidine 5'-phosphate decarboxylase (278 aa).

Residues Asp-40, 62-64 (KTH), 93-102 (DRKFIDIGNT), Tyr-229, and Arg-247 contribute to the substrate site. The active-site Proton donor is Lys-95.

It belongs to the OMP decarboxylase family.

It carries out the reaction orotidine 5'-phosphate + H(+) = UMP + CO2. Its pathway is pyrimidine metabolism; UMP biosynthesis via de novo pathway; UMP from orotate: step 2/2. This Aspergillus fumigatus (strain ATCC MYA-4609 / CBS 101355 / FGSC A1100 / Af293) (Neosartorya fumigata) protein is Orotidine 5'-phosphate decarboxylase (pyrG).